The primary structure comprises 143 residues: Ribonuclease H (143 aa).

Residues 1–136 (MQEIEIFCDG…CDSLAKLEAQ (136 aa)) enclose the RNase H type-1 domain. Mg(2+) is bound by residues Asp9, Glu47, Asp69, and Asp128.

The protein belongs to the RNase H family. Monomer. Mg(2+) is required as a cofactor.

Its subcellular location is the cytoplasm. It catalyses the reaction Endonucleolytic cleavage to 5'-phosphomonoester.. Functionally, endonuclease that specifically degrades the RNA of RNA-DNA hybrids. In Helicobacter acinonychis (strain Sheeba), this protein is Ribonuclease H.